The following is a 125-amino-acid chain: Large ribosomal subunit protein bL12 (125 aa).

It belongs to the bacterial ribosomal protein bL12 family. Homodimer. Part of the ribosomal stalk of the 50S ribosomal subunit. Forms a multimeric L10(L12)X complex, where L10 forms an elongated spine to which 2 to 4 L12 dimers bind in a sequential fashion. Binds GTP-bound translation factors.

Forms part of the ribosomal stalk which helps the ribosome interact with GTP-bound translation factors. Is thus essential for accurate translation. The protein is Large ribosomal subunit protein bL12 of Sinorhizobium medicae (strain WSM419) (Ensifer medicae).